The following is a 1070-amino-acid chain: Carbamoyl phosphate synthase large chain (1070 aa).

A carboxyphosphate synthetic domain region spans residues 1 to 401 (MPKRDDIKTI…ALLKAVRSLE (401 aa)). Residues R129, R169, G175, G176, K208, I210, E215, G241, I242, H243, Q284, and E298 each contribute to the ATP site. Residues 133–327 (RDLMNELGEP…IAKLAAKIAV (195 aa)) form the ATP-grasp 1 domain. The Mg(2+) site is built by Q284, E298, and N300. Q284, E298, and N300 together coordinate Mn(2+). The tract at residues 402-546 (VGADHLLLEE…YSTYEEENES (145 aa)) is oligomerization domain. The segment at 547–929 (TRSAKESVIV…ALYKGFVASG (383 aa)) is carbamoyl phosphate synthetic domain. The ATP-grasp 2 domain maps to 671 to 861 (EKALEILQIP…MANVATRVIL (191 aa)). 10 residues coordinate ATP: R707, R746, V748, E752, G777, V778, H779, S780, Q820, and E832. 3 residues coordinate Mg(2+): Q820, E832, and N834. Positions 820, 832, and 834 each coordinate Mn(2+). An MGS-like domain is found at 930–1070 (TTMHDYGTVL…SEVKQPKVRV (141 aa)). Positions 930 to 1070 (TTMHDYGTVL…SEVKQPKVRV (141 aa)) are allosteric domain.

It belongs to the CarB family. As to quaternary structure, composed of two chains; the small (or glutamine) chain promotes the hydrolysis of glutamine to ammonia, which is used by the large (or ammonia) chain to synthesize carbamoyl phosphate. Tetramer of heterodimers (alpha,beta)4. Mg(2+) is required as a cofactor. Requires Mn(2+) as cofactor.

The enzyme catalyses hydrogencarbonate + L-glutamine + 2 ATP + H2O = carbamoyl phosphate + L-glutamate + 2 ADP + phosphate + 2 H(+). It catalyses the reaction hydrogencarbonate + NH4(+) + 2 ATP = carbamoyl phosphate + 2 ADP + phosphate + 2 H(+). It functions in the pathway amino-acid biosynthesis; L-arginine biosynthesis; carbamoyl phosphate from bicarbonate: step 1/1. It participates in pyrimidine metabolism; UMP biosynthesis via de novo pathway; (S)-dihydroorotate from bicarbonate: step 1/3. Large subunit of the glutamine-dependent carbamoyl phosphate synthetase (CPSase). CPSase catalyzes the formation of carbamoyl phosphate from the ammonia moiety of glutamine, carbonate, and phosphate donated by ATP, constituting the first step of 2 biosynthetic pathways, one leading to arginine and/or urea and the other to pyrimidine nucleotides. The large subunit (synthetase) binds the substrates ammonia (free or transferred from glutamine from the small subunit), hydrogencarbonate and ATP and carries out an ATP-coupled ligase reaction, activating hydrogencarbonate by forming carboxy phosphate which reacts with ammonia to form carbamoyl phosphate. This chain is Carbamoyl phosphate synthase large chain, found in Listeria welshimeri serovar 6b (strain ATCC 35897 / DSM 20650 / CCUG 15529 / CIP 8149 / NCTC 11857 / SLCC 5334 / V8).